The following is a 302-amino-acid chain: Methionyl-tRNA formyltransferase (302 aa).

106–109 (SVLP) lines the (6S)-5,6,7,8-tetrahydrofolate pocket.

The protein belongs to the Fmt family.

The catalysed reaction is L-methionyl-tRNA(fMet) + (6R)-10-formyltetrahydrofolate = N-formyl-L-methionyl-tRNA(fMet) + (6S)-5,6,7,8-tetrahydrofolate + H(+). Its function is as follows. Attaches a formyl group to the free amino group of methionyl-tRNA(fMet). The formyl group appears to play a dual role in the initiator identity of N-formylmethionyl-tRNA by promoting its recognition by IF2 and preventing the misappropriation of this tRNA by the elongation apparatus. The protein is Methionyl-tRNA formyltransferase of Hydrogenobaculum sp. (strain Y04AAS1).